Here is a 91-residue protein sequence, read N- to C-terminus: LKNIMPELEVRSRRIGGQKYQIPSEVRPERKQSLGLRWLVQFAQKRNEKTMQQKLAKEIIDAASGNGLAVKKREEIHRMAEANKSFAHYRW.

This sequence belongs to the universal ribosomal protein uS7 family. As to quaternary structure, part of the 30S ribosomal subunit. Contacts proteins S9 and S11.

In terms of biological role, one of the primary rRNA binding proteins, it binds directly to 16S rRNA where it nucleates assembly of the head domain of the 30S subunit. Is located at the subunit interface close to the decoding center, probably blocks exit of the E-site tRNA. The chain is Small ribosomal subunit protein uS7 (rpsG) from Apple proliferation phytoplasma.